The following is a 784-amino-acid chain: Homoaconitase, mitochondrial (784 aa).

A mitochondrion-targeting transit peptide spans Met1–Ser32. Positions 399, 468, and 471 each coordinate [4Fe-4S] cluster. A disordered region spans residues Glu572–Thr596. A compositionally biased stretch (low complexity) spans Glu578–Ser589.

The protein belongs to the aconitase/IPM isomerase family. [4Fe-4S] cluster is required as a cofactor.

The protein resides in the mitochondrion. It catalyses the reaction (2R,3S)-homoisocitrate = cis-homoaconitate + H2O. It participates in amino-acid biosynthesis; L-lysine biosynthesis via AAA pathway; L-alpha-aminoadipate from 2-oxoglutarate: step 3/5. Its function is as follows. Catalyzes the reversible hydration of cis-homoaconitate to (2R,3S)-homoisocitrate, a step in the alpha-aminoadipate pathway for lysine biosynthesis. The sequence is that of Homoaconitase, mitochondrial (lys-4) from Neurospora crassa (strain ATCC 24698 / 74-OR23-1A / CBS 708.71 / DSM 1257 / FGSC 987).